Consider the following 481-residue polypeptide: GTPase Obg (481 aa).

The 158-residue stretch at 2–159 folds into the Obg domain; the sequence is TTFVDRVVLH…LDAVLELKSV (158 aa). Residues 160-330 form the OBG-type G domain; that stretch reads ADIGLVGYPS…LMFAMGELVA (171 aa). GTP is bound by residues 166–173, 191–195, 212–215, 282–285, and 311–313; these read GYPSAGKS, FTTLV, DVPG, NKID, and SAA. The Mg(2+) site is built by Ser173 and Thr193. One can recognise an OCT domain in the interval 348 to 426; sequence PKAVDDAGFT…IGEREFDWHP (79 aa). Positions 440 to 481 are disordered; sequence DQRLAEKTQRPSAAERLAARKARRQRPGDEPESDELDGDSGE. Acidic residues predominate over residues 469–481; that stretch reads EPESDELDGDSGE.

Belongs to the TRAFAC class OBG-HflX-like GTPase superfamily. OBG GTPase family. Monomer. Mg(2+) is required as a cofactor.

It is found in the cytoplasm. An essential GTPase which binds GTP, GDP and possibly (p)ppGpp with moderate affinity, with high nucleotide exchange rates and a fairly low GTP hydrolysis rate. Plays a role in control of the cell cycle, stress response, ribosome biogenesis and in those bacteria that undergo differentiation, in morphogenesis control. In Salinispora arenicola (strain CNS-205), this protein is GTPase Obg.